We begin with the raw amino-acid sequence, 398 residues long: S-adenosylmethionine synthase (398 aa).

Histidine 16 is an ATP binding site. Residue aspartate 18 coordinates Mg(2+). Glutamate 44 is a K(+) binding site. Positions 57 and 100 each coordinate L-methionine. The interval 100 to 110 (QSPDIAQGVNE) is flexible loop. ATP contacts are provided by residues 175–177 (DAK), 242–243 (RF), aspartate 251, 257–258 (RK), alanine 274, and lysine 278. Aspartate 251 serves as a coordination point for L-methionine. Lysine 282 serves as a coordination point for L-methionine.

Belongs to the AdoMet synthase family. In terms of assembly, homotetramer; dimer of dimers. Requires Mg(2+) as cofactor. K(+) serves as cofactor.

It is found in the cytoplasm. The catalysed reaction is L-methionine + ATP + H2O = S-adenosyl-L-methionine + phosphate + diphosphate. It functions in the pathway amino-acid biosynthesis; S-adenosyl-L-methionine biosynthesis; S-adenosyl-L-methionine from L-methionine: step 1/1. In terms of biological role, catalyzes the formation of S-adenosylmethionine (AdoMet) from methionine and ATP. The overall synthetic reaction is composed of two sequential steps, AdoMet formation and the subsequent tripolyphosphate hydrolysis which occurs prior to release of AdoMet from the enzyme. The protein is S-adenosylmethionine synthase of Streptococcus agalactiae serotype Ia (strain ATCC 27591 / A909 / CDC SS700).